Consider the following 427-residue polypeptide: 4-hydroxy-3-methylbut-2-en-1-yl diphosphate synthase (flavodoxin) (427 aa).

A disordered region spans residues 1 to 21; that stretch reads MNKLENTIDSDIAGPAPRHRT. The [4Fe-4S] cluster site is built by cysteine 310, cysteine 313, cysteine 356, and glutamate 363.

The protein belongs to the IspG family. The cofactor is [4Fe-4S] cluster.

It catalyses the reaction (2E)-4-hydroxy-3-methylbut-2-enyl diphosphate + oxidized [flavodoxin] + H2O + 2 H(+) = 2-C-methyl-D-erythritol 2,4-cyclic diphosphate + reduced [flavodoxin]. Its pathway is isoprenoid biosynthesis; isopentenyl diphosphate biosynthesis via DXP pathway; isopentenyl diphosphate from 1-deoxy-D-xylulose 5-phosphate: step 5/6. Its function is as follows. Converts 2C-methyl-D-erythritol 2,4-cyclodiphosphate (ME-2,4cPP) into 1-hydroxy-2-methyl-2-(E)-butenyl 4-diphosphate. The chain is 4-hydroxy-3-methylbut-2-en-1-yl diphosphate synthase (flavodoxin) from Bradyrhizobium diazoefficiens (strain JCM 10833 / BCRC 13528 / IAM 13628 / NBRC 14792 / USDA 110).